A 284-amino-acid chain; its full sequence is 4-hydroxybenzoate octaprenyltransferase (284 aa).

9 helical membrane-spanning segments follow: residues 19–39 (IPIL…SHGL), 42–62 (ISYL…GCII), 85–105 (GQLS…VAFI), 107–127 (VLFL…LAIL), 134–154 (FFAI…FMAF), 165–185 (AWIF…IYAL), 211–231 (ILLF…YCDF), 233–253 (SFFY…YFLY), and 261–281 (CINA…IAVI).

The protein belongs to the UbiA prenyltransferase family. The cofactor is Mg(2+).

Its subcellular location is the cell inner membrane. It catalyses the reaction all-trans-octaprenyl diphosphate + 4-hydroxybenzoate = 4-hydroxy-3-(all-trans-octaprenyl)benzoate + diphosphate. It participates in cofactor biosynthesis; ubiquinone biosynthesis. Its function is as follows. Catalyzes the prenylation of para-hydroxybenzoate (PHB) with an all-trans polyprenyl group. Mediates the second step in the final reaction sequence of ubiquinone-8 (UQ-8) biosynthesis, which is the condensation of the polyisoprenoid side chain with PHB, generating the first membrane-bound Q intermediate 3-octaprenyl-4-hydroxybenzoate. The polypeptide is 4-hydroxybenzoate octaprenyltransferase (Francisella tularensis subsp. holarctica (strain LVS)).